Reading from the N-terminus, the 269-residue chain is Tryptophan synthase alpha chain (269 aa).

Catalysis depends on proton acceptor residues E49 and D60.

Belongs to the TrpA family. In terms of assembly, tetramer of two alpha and two beta chains.

The catalysed reaction is (1S,2R)-1-C-(indol-3-yl)glycerol 3-phosphate + L-serine = D-glyceraldehyde 3-phosphate + L-tryptophan + H2O. The protein operates within amino-acid biosynthesis; L-tryptophan biosynthesis; L-tryptophan from chorismate: step 5/5. In terms of biological role, the alpha subunit is responsible for the aldol cleavage of indoleglycerol phosphate to indole and glyceraldehyde 3-phosphate. The polypeptide is Tryptophan synthase alpha chain (Pseudomonas syringae pv. syringae).